Reading from the N-terminus, the 1389-residue chain is DNA-directed RNA polymerase subunit beta'' (1389 aa).

The Zn(2+) site is built by Cys220, Cys290, Cys297, and Cys300.

The protein belongs to the RNA polymerase beta' chain family. RpoC2 subfamily. In plastids the minimal PEP RNA polymerase catalytic core is composed of four subunits: alpha, beta, beta', and beta''. When a (nuclear-encoded) sigma factor is associated with the core the holoenzyme is formed, which can initiate transcription. It depends on Zn(2+) as a cofactor.

It localises to the plastid. Its subcellular location is the chloroplast. The enzyme catalyses RNA(n) + a ribonucleoside 5'-triphosphate = RNA(n+1) + diphosphate. In terms of biological role, DNA-dependent RNA polymerase catalyzes the transcription of DNA into RNA using the four ribonucleoside triphosphates as substrates. This is DNA-directed RNA polymerase subunit beta'' from Chloranthus spicatus (Chulantree).